Reading from the N-terminus, the 2567-residue chain is Highly reducing polyketide synthase sor1 (2567 aa).

Residues 14–436 (SEPIAIIGMS…GANAHIILED (423 aa)) form the Ketosynthase family 3 (KS3) domain. Catalysis depends on for beta-ketoacyl synthase activity residues cysteine 187, histidine 322, and histidine 359. Residues 550–841 (VFTGQGAQWW…VVEVGPHTAL (292 aa)) are malonyl-CoA:ACP transacylase (MAT) domain. Positions 939–1079 (HHLLGSLVEG…GLISIEFEAS (141 aa)) are N-terminal hotdog fold. The tract at residues 939-1249 (HHLLGSLVEG…GFSYQSLGRS (311 aa)) is dehydratase (DH) domain. The PKS/mFAS DH domain maps to 939 to 1252 (HHLLGSLVEG…YQSLGRSVSL (314 aa)). Histidine 971 (proton acceptor; for dehydratase activity) is an active-site residue. Residues 1095–1252 (YKRQIPPAQL…YQSLGRSVSL (158 aa)) are C-terminal hotdog fold. The active-site Proton donor; for dehydratase activity is aspartate 1161. Residues 1426-1534 (LEIGASTGGI…RSLLKPGGTL (109 aa)) form a methyltransferase (CMet) domain region. Residues 1852–2163 (FLPELLVFGD…TEEETGKRVL (312 aa)) are enoyl reductase (ER) domain. Residues 2187 to 2369 (ASYLIVGGNG…AVSIDLSLVD (183 aa)) form a ketoreductase (KR) domain region. The 78-residue stretch at 2481–2558 (EAISVVGSAV…QLVANVVDRS (78 aa)) folds into the Carrier domain. Serine 2518 carries the O-(pantetheine 4'-phosphoryl)serine modification.

The protein operates within secondary metabolite biosynthesis. Highly reducing polyketide synthase; part of the SOR gene cluster that mediates the biosynthesis of sorbicillinoids, a diverse group of yellow secondary metabolites that restrict growth of competing pathogenic fungi but not of bacteria. Sorbicillinoids biosynthesis requires the action of two PKSs. The SOR cluster is required for the production of trichodimerol and dihydrotrichotetronin, with sor2 being sufficient for production of trichodimerol, but not dihydrotrichotetronin in the light. Sor1 iteratively combines three acetyl units and the growing chain is modified by the ketoacyl reductase subunit, and optional by the enoyl reductase subunit in the second cycle. The polyketide is then handed over to the PKS sor2, which adds three more acetyl units, and two methyl groups. Sor2 releases an aldehyde, which undergoes spontaneous cyclization resulting in the formation of sorbicillin or 2',3'-dihydrosorbicillin. The monooxygenase sor5 oxidizes sorbicillin and 2',3'-dihydrosorbicillin to 2',3'-dihydrosorbicillinol and sorbicillinol, respectively. The oxidoreductase sor8 further converts sorbicillinol into oxosorbicillinol. Sorbicillinol is the building block for the other sorbicillinoids such as disorbicillinol, bisvertinolon, dihydrobisvertinolone, and dihydrotrichotetronine. The chain is Highly reducing polyketide synthase sor1 from Hypocrea jecorina (strain QM6a) (Trichoderma reesei).